Reading from the N-terminus, the 1778-residue chain is Ankyrin repeat domain-containing protein 36C (1778 aa).

ANK repeat units follow at residues 64–93 (KERT…ELNL), 97–126 (EDRT…DPNI), 130–159 (FGRT…NIEE), 163–192 (DEYP…NINA), and 196–225 (LGRS…DVFS). Disordered stretches follow at residues 260-365 (LSIN…DEQK), 501-526 (ALPA…VKDS), 538-653 (DSLT…QKQS), 671-1027 (RITG…QKQL), and 1051-1072 (IRGT…EKDS). 2 stretches are compositionally biased toward polar residues: residues 261–272 (SINSNPVSSQKQ) and 297–306 (KSGTVSSQKQ). Low complexity predominate over residues 539-555 (SLTSSEESSERPPLSTL). Basic and acidic residues-rich tracts occupy residues 585 to 596 (PAEKATSDDKDS) and 619 to 630 (PAEKATSDEKDS). 2 stretches are compositionally biased toward polar residues: residues 631–653 (VSNI…QKQS) and 679–691 (GTVS…PSKA). Basic and acidic residues predominate over residues 794 to 813 (TSDEKDSFSNITREKKDGEI). Serine 829 is modified (phosphoserine). Composition is skewed to basic and acidic residues over residues 840–849 (RGKEDGEKTR) and 862–881 (TSDE…DGET). Residue serine 897 is modified to Phosphoserine. Basic and acidic residues predominate over residues 907–917 (AREKKDGEKSR). Over residues 942–955 (RGKKHGEKTRRVSS) the composition is skewed to basic residues. Polar residues-rich tracts occupy residues 983–992 (ISGTVSSQKQ) and 1005–1026 (VSNI…SQKQ). Coiled coils occupy residues 1157–1187 (EQDL…QIHS), 1247–1333 (ELKD…YRIE), 1362–1480 (SETD…DHDQ), and 1544–1768 (VFEH…ILQH).

Belongs to the ANKRD36 family.

In Homo sapiens (Human), this protein is Ankyrin repeat domain-containing protein 36C (ANKRD36C).